Consider the following 67-residue polypeptide: Large ribosomal subunit protein bL35 (67 aa).

Positions 1 to 16 are enriched in basic residues; it reads MPKMKTKSGAKKRFRV. The disordered stretch occupies residues 1–25; that stretch reads MPKMKTKSGAKKRFRVRPGGTVKRG.

It belongs to the bacterial ribosomal protein bL35 family.

This chain is Large ribosomal subunit protein bL35, found in Polaromonas sp. (strain JS666 / ATCC BAA-500).